Here is a 478-residue protein sequence, read N- to C-terminus: Putative multidrug resistance outer membrane protein MdtQ (478 aa).

Positions methionine 1–glycine 21 are cleaved as a signal peptide. Residue cysteine 22 is the site of N-palmitoyl cysteine attachment. Cysteine 22 is lipidated: S-diacylglycerol cysteine.

The protein belongs to the outer membrane factor (OMF) (TC 1.B.17) family.

The protein resides in the cell outer membrane. Could be involved in resistance to puromycin, acriflavine and tetraphenylarsonium chloride. This is Putative multidrug resistance outer membrane protein MdtQ (mdtQ) from Escherichia coli (strain K12).